Consider the following 248-residue polypeptide: Agamous-like MADS-box protein AGL1 (248 aa).

The 55-residue stretch at 18–72 (RGKIEIKRIENTTNRQVTFCKRRNGLLKKAYELSVLCDAEVALVIFSTRGRLYEY) folds into the MADS-box domain. The 91-residue stretch at 102-192 (TQYYQQEASK…RAKIAEGARL (91 aa)) folds into the K-box domain.

In terms of assembly, interacts with AGL15 and AGL16.

It is found in the nucleus. Its function is as follows. Probable transcription factor. Interacts genetically with TT16/AGL32 in a partially antagonistic manner during flower development. Is essential for the coordination of cell divisions in ovule, seed coat development and endosperm formation. This chain is Agamous-like MADS-box protein AGL1 (AGL1), found in Arabidopsis thaliana (Mouse-ear cress).